The chain runs to 663 residues: Putative glucosamine-6-phosphate deaminase-like protein BT_0258 (663 aa).

A glucosamine-6-phosphate deaminase-like region spans residues 1–290; the sequence is MKTNLSSQIT…NLTRIQRPWL (290 aa). The active site involves E184.

It in the N-terminal section; belongs to the glucosamine/galactosamine-6-phosphate isomerase family. NagB subfamily.

This Bacteroides thetaiotaomicron (strain ATCC 29148 / DSM 2079 / JCM 5827 / CCUG 10774 / NCTC 10582 / VPI-5482 / E50) protein is Putative glucosamine-6-phosphate deaminase-like protein BT_0258.